Consider the following 184-residue polypeptide: Gastrokine-1 (184 aa).

Residues 1–20 form the signal peptide; it reads MKLTMFVVGLLGLLAAPGFA. Residues 54–148 enclose the BRICHOS domain; sequence NNGWDSWNSL…MCRGIPTYVA (95 aa). Cysteine 81 and cysteine 140 are oxidised to a cystine.

Belongs to the gastrokine family. As to expression, expressed in the stomach. Highly expressed specifically in surface cells of the antrum mucosa from where it is secreted.

The protein resides in the secreted. The protein localises to the cytoplasmic granule. Its subcellular location is the golgi apparatus. Functionally, has mitogenic activity and may be involved in maintaining the integrity of the gastric mucosal epithelium. The sequence is that of Gastrokine-1 (Gkn1) from Mus musculus (Mouse).